We begin with the raw amino-acid sequence, 682 residues long: Methionine--tRNA ligase (682 aa).

The 'HIGH' region signature appears at 15–25 (PYANGAIHLGH). The Zn(2+) site is built by Cys-146, Cys-149, Cys-159, and Cys-162. The short motif at 331–335 (KMSKS) is the 'KMSKS' region element. Lys-334 lines the ATP pocket. In terms of domain architecture, tRNA-binding spans 580–682 (DLAKLDMRVA…NGVTAGMQVK (103 aa)).

It belongs to the class-I aminoacyl-tRNA synthetase family. MetG type 1 subfamily. Homodimer. It depends on Zn(2+) as a cofactor.

Its subcellular location is the cytoplasm. The catalysed reaction is tRNA(Met) + L-methionine + ATP = L-methionyl-tRNA(Met) + AMP + diphosphate. In terms of biological role, is required not only for elongation of protein synthesis but also for the initiation of all mRNA translation through initiator tRNA(fMet) aminoacylation. This chain is Methionine--tRNA ligase, found in Haemophilus influenzae (strain 86-028NP).